Reading from the N-terminus, the 214-residue chain is Putative pit accessory protein (214 aa).

The protein belongs to the UPF0111 family.

Could be involved in orthophosphate transport. The protein is Putative pit accessory protein of Rhizobium meliloti (strain 1021) (Ensifer meliloti).